Consider the following 222-residue polypeptide: Adapter protein MecA (222 aa).

Belongs to the MecA family. Homodimer.

Enables the recognition and targeting of unfolded and aggregated proteins to the ClpC protease or to other proteins involved in proteolysis. This chain is Adapter protein MecA, found in Lysinibacillus sphaericus (strain C3-41).